Consider the following 482-residue polypeptide: MRYRPVIGLEIHVQLSTKTKAFCSCPADVFELPPNTAICPVCTGQPGALPVPNEEMIRFAVKTALALNCKIHKYSRFDRKNYFYPDLPKGYQISQYFYPIATEGFLEIDGDEGRKKVRIRRLHLEEDAGKLVHEGDSITRASYSLVDMNRCGVPLIEIVTEPDISSPREARVFMEKLRSIVRYLGVSTGDMEKGALRCDANISVVDTETGRQSNRVEVKNMNSFRFVEKALEYEFERIVKAMERGEDVERETRGWDMTTKTTVSMRGKEEESDYRYFPEPDIPPVVLSDEYLEEVKKELPELPDEKAKRFMREYDLPEYDAKVLTSSKELAEFFEECVKVVNRPKDLSNWIMTEVLRELNERNIEITESKLTPQHFADLFKLMDEGKISIKIAKEIFPEVFETGKMPSQIVEEKGLVQISDEKLIEELVKKAMEQNPKAVQDYKSGKKKAAGFFVGYVMRETKGKANPELTNRIIQKLLEGE.

The protein belongs to the GatB/GatE family. GatB subfamily. As to quaternary structure, heterotrimer of A, B and C subunits.

The enzyme catalyses L-glutamyl-tRNA(Gln) + L-glutamine + ATP + H2O = L-glutaminyl-tRNA(Gln) + L-glutamate + ADP + phosphate + H(+). It catalyses the reaction L-aspartyl-tRNA(Asn) + L-glutamine + ATP + H2O = L-asparaginyl-tRNA(Asn) + L-glutamate + ADP + phosphate + 2 H(+). Its function is as follows. Allows the formation of correctly charged Asn-tRNA(Asn) or Gln-tRNA(Gln) through the transamidation of misacylated Asp-tRNA(Asn) or Glu-tRNA(Gln) in organisms which lack either or both of asparaginyl-tRNA or glutaminyl-tRNA synthetases. The reaction takes place in the presence of glutamine and ATP through an activated phospho-Asp-tRNA(Asn) or phospho-Glu-tRNA(Gln). The sequence is that of Aspartyl/glutamyl-tRNA(Asn/Gln) amidotransferase subunit B from Thermotoga petrophila (strain ATCC BAA-488 / DSM 13995 / JCM 10881 / RKU-1).